The primary structure comprises 395 residues: Sensor protein DltS (395 aa).

2 helical membrane passes run 9 to 29 (FVFLTMSILIVVVLFLFAVSN) and 136 to 156 (FLILVFTIFGFCLLAAVSLYL). Residues 177-387 (DASHELKTPI…RLEVQLPIDG (211 aa)) form the Histidine kinase domain. Position 180 is a phosphohistidine; by autocatalysis (H180).

The protein localises to the cell membrane. It catalyses the reaction ATP + protein L-histidine = ADP + protein N-phospho-L-histidine.. In terms of biological role, member of the two-component regulatory system DltS/DltR. Regulates the expression of the dlt operon. Probably phosphorylates DltR. The chain is Sensor protein DltS (dltS) from Streptococcus agalactiae serotype III (strain NEM316).